The primary structure comprises 225 residues: THAP domain-containing protein 1 A (225 aa).

The THAP-type zinc-finger motif lies at 5-57 (CSAYGCKNRYDKDKPISFHKFPLKRPLLCKKWEAAVRRAEFKPTKYSSICSDH). A coiled-coil region spans residues 139-194 (VEDTVHQRRRIQQLEEQVDKLRKKLKIANQKCRRQERSLEKLEREVSEYREAKGSG).

This sequence belongs to the THAP1 family.

The protein localises to the nucleus. It localises to the nucleoplasm. DNA-binding transcription regulator that regulates endothelial cell proliferation and G1/S cell-cycle progression. Specifically binds the 5'-[AT]NTNN[GT]GGCA[AGT]-3' core DNA sequence and acts by modulating expression of pRB-E2F cell-cycle target genes. The protein is THAP domain-containing protein 1 A (thap1-a) of Xenopus laevis (African clawed frog).